The primary structure comprises 290 residues: Ribosomal protein L11 methyltransferase (290 aa).

The S-adenosyl-L-methionine site is built by Thr135, Gly158, Asp180, and Asn227.

It belongs to the methyltransferase superfamily. PrmA family.

The protein localises to the cytoplasm. The enzyme catalyses L-lysyl-[protein] + 3 S-adenosyl-L-methionine = N(6),N(6),N(6)-trimethyl-L-lysyl-[protein] + 3 S-adenosyl-L-homocysteine + 3 H(+). Functionally, methylates ribosomal protein L11. This is Ribosomal protein L11 methyltransferase from Chelativorans sp. (strain BNC1).